Consider the following 719-residue polypeptide: Polyribonucleotide nucleotidyltransferase (719 aa).

Positions 507 and 513 each coordinate Mg(2+). A KH domain is found at 573 to 633 (PKLELFSVDP…EQIKAAKDYI (61 aa)). The region spanning 658–719 (GQEFQGIVKK…NGKISVDLCE (62 aa)) is the S1 motif domain.

Belongs to the polyribonucleotide nucleotidyltransferase family. Requires Mg(2+) as cofactor.

It is found in the cytoplasm. The catalysed reaction is RNA(n+1) + phosphate = RNA(n) + a ribonucleoside 5'-diphosphate. Its function is as follows. Involved in mRNA degradation. Catalyzes the phosphorolysis of single-stranded polyribonucleotides processively in the 3'- to 5'-direction. The chain is Polyribonucleotide nucleotidyltransferase from Campylobacter jejuni subsp. jejuni serotype O:2 (strain ATCC 700819 / NCTC 11168).